The primary structure comprises 392 residues: uncharacterized protein (392 aa).

An N-terminal signal peptide occupies residues 1–19 (MRRIVCPPVLFLSASLLTG). The N-palmitoyl cysteine moiety is linked to residue Cys20. Cys20 carries S-diacylglycerol cysteine lipidation. The disordered stretch occupies residues 148 to 173 (SSGSSGGGGGGSGSSSDGGIKNGSDE). Residues 151-160 (SSGGGGGGSG) show a composition bias toward gly residues.

The protein belongs to the TP013X lipoprotein family.

It localises to the cell membrane. This is an uncharacterized protein from Treponema pallidum (strain Nichols).